We begin with the raw amino-acid sequence, 418 residues long: Hydroxysteroid dehydrogenase-like protein 2 (418 aa).

NADP(+) contacts are provided by residues 17–23, K42, and D74; that span reads GASRGIG. K42 is subject to N6-(2-hydroxyisobutyryl)lysine. K116 carries the post-translational modification N6-acetyllysine. Residue Y168 is the Proton acceptor of the active site. K172 contacts NADP(+). An SCP2 domain is found at 306 to 415; sequence RSGAVEETFR…KLEKLMNQMN (110 aa). At K318 the chain carries N6-succinyllysine.

It belongs to the short-chain dehydrogenases/reductases (SDR) family.

Its subcellular location is the peroxisome. It is found in the mitochondrion. Functionally, has apparently no steroid dehydrogenase activity. Controls bile acid (BA) and lipid metabolism in response to nutritional cues. The chain is Hydroxysteroid dehydrogenase-like protein 2 (HSDL2) from Bos taurus (Bovine).